A 587-amino-acid polypeptide reads, in one-letter code: Pyruvate decarboxylase 3 (587 aa).

2 residues coordinate substrate: Asp-48 and His-135. Residues 415 to 496 (DSWFNCQKLR…FLINNGGYTI (82 aa)) are thiamine pyrophosphate binding. Residues Asp-464, Asn-491, and Gly-493 each contribute to the Mg(2+) site. Glu-497 serves as a coordination point for substrate.

Belongs to the TPP enzyme family. Homotetramer. A metal cation is required as a cofactor. It depends on thiamine diphosphate as a cofactor.

The enzyme catalyses a 2-oxocarboxylate + H(+) = an aldehyde + CO2. The protein is Pyruvate decarboxylase 3 (PDC3) of Oryza sativa subsp. indica (Rice).